The following is a 169-amino-acid chain: Probable calcium-binding protein CML20 (169 aa).

The interval 1-23 (MSSIYRTVSRKEKPRRHHGLTTQ) is disordered. EF-hand domains are found at residues 23–58 (QKKQ…LGFE), 59–94 (MTEE…KIGE), 96–131 (DTKE…LGEN), and 132–167 (FTDA…TAYG). Residues Asp36, Asp38, Ser40, Thr42, Glu47, Asp72, Asp74, Ser76, Glu83, Asp109, Asp111, Asn113, Lys115, Asp120, Asp145, Asp147, Asp149, Glu151, and Glu156 each coordinate Ca(2+).

In terms of assembly, interacts with TON1A and TON1B. Interacts with SAC3A and SAC3B. Interacts with UCH1 and UCH2.

Its function is as follows. Potential calcium sensor. The protein is Probable calcium-binding protein CML20 of Arabidopsis thaliana (Mouse-ear cress).